The sequence spans 748 residues: Cysteine--tRNA ligase, cytoplasmic (748 aa).

A disordered region spans residues 1 to 25; sequence MADSSGQQGKGRRVQPQWSPPAGTQ. Ala-2 carries the N-acetylalanine modification. Ser-19 carries the phosphoserine modification. Cys-55 contributes to the Zn(2+) binding site. Residue Gly-56 coordinates L-cysteine. The short motif at 57-67 is the 'HIGH' region element; it reads PTVYDASHMGH. Arg-79 carries the post-translational modification Phosphoserine. Thr-96 lines the L-cysteine pocket. The 'KIIK' region signature appears at 101 to 104; that stretch reads KIIK. 2 positions are modified to phosphoserine: Ser-305 and Ser-307. Zn(2+) contacts are provided by Cys-348, His-373, and Glu-377. Position 373 (His-373) interacts with L-cysteine. A 'KMSKS' region motif is present at residues 406-410; that stretch reads KMSKS. Position 409 (Lys-409) interacts with ATP. At Lys-503 the chain carries N6-acetyllysine. Basic and acidic residues predominate over residues 653–679; that stretch reads EKRRVEEEKRKKKEEAARRKQEQEAAK. Residues 653–686 are disordered; the sequence is EKRRVEEEKRKKKEEAARRKQEQEAAKLAKMKIP. Position 746 is a phosphoserine (Ser-746).

The protein belongs to the class-I aminoacyl-tRNA synthetase family. In terms of assembly, homodimer. Requires Zn(2+) as cofactor.

The protein localises to the cytoplasm. The catalysed reaction is tRNA(Cys) + L-cysteine + ATP = L-cysteinyl-tRNA(Cys) + AMP + diphosphate. Functionally, catalyzes the ATP-dependent ligation of cysteine to tRNA(Cys). This Homo sapiens (Human) protein is Cysteine--tRNA ligase, cytoplasmic.